The chain runs to 97 residues: Aspartyl/glutamyl-tRNA(Asn/Gln) amidotransferase subunit C (97 aa).

This sequence belongs to the GatC family. In terms of assembly, heterotrimer of A, B and C subunits.

The catalysed reaction is L-glutamyl-tRNA(Gln) + L-glutamine + ATP + H2O = L-glutaminyl-tRNA(Gln) + L-glutamate + ADP + phosphate + H(+). It catalyses the reaction L-aspartyl-tRNA(Asn) + L-glutamine + ATP + H2O = L-asparaginyl-tRNA(Asn) + L-glutamate + ADP + phosphate + 2 H(+). Allows the formation of correctly charged Asn-tRNA(Asn) or Gln-tRNA(Gln) through the transamidation of misacylated Asp-tRNA(Asn) or Glu-tRNA(Gln) in organisms which lack either or both of asparaginyl-tRNA or glutaminyl-tRNA synthetases. The reaction takes place in the presence of glutamine and ATP through an activated phospho-Asp-tRNA(Asn) or phospho-Glu-tRNA(Gln). This Prochlorococcus marinus (strain MIT 9313) protein is Aspartyl/glutamyl-tRNA(Asn/Gln) amidotransferase subunit C.